Reading from the N-terminus, the 592-residue chain is Arginine--tRNA ligase (592 aa).

A 'HIGH' region motif is present at residues 134 to 144 (ANPTGPLHVGH).

The protein belongs to the class-I aminoacyl-tRNA synthetase family. In terms of assembly, monomer.

It localises to the cytoplasm. It catalyses the reaction tRNA(Arg) + L-arginine + ATP = L-arginyl-tRNA(Arg) + AMP + diphosphate. The chain is Arginine--tRNA ligase from Coxiella burnetii (strain CbuG_Q212) (Coxiella burnetii (strain Q212)).